The primary structure comprises 105 residues: Secreted effector protein PINE1 (105 aa).

The first 21 residues, 1-21, serve as a signal peptide directing secretion; the sequence is MKLSQPLSIFAILAASTVAVA.

Interacts with Arabidopsis thaliana PGIP1.

The protein resides in the secreted. In terms of biological role, effector protein required for full virulence. Directly interacts with and functionally inactivates PG-inhibiting proteins (PGIPs). PGIPs are a defense mechanism of infected plants, that inhibit the plant pathogens secreted polygalacturonases (PGs) used to degrade the plant cell wall. Excerts its function by interacting with host PGIPs to negate their polygalacturonase-inhibiting function via enhanced dissociation of PGIPs from PGs. The chain is Secreted effector protein PINE1 from Sclerotinia sclerotiorum (strain ATCC 18683 / 1980 / Ss-1) (White mold).